We begin with the raw amino-acid sequence, 328 residues long: Versiconal hemiacetal acetate esterase (328 aa).

The Involved in the stabilization of the negatively charged intermediate by the formation of the oxyanion hole signature appears at 82 to 84; the sequence is HGG. Catalysis depends on residues Ser156, Asp260, and His290.

It belongs to the 'GDXG' lipolytic enzyme family.

It carries out the reaction (2S,3S)-versiconal hemiacetal acetate + H2O = (2S-3S)-versiconal hemiacetal + acetate + H(+). The catalysed reaction is (3S)-versiconol acetate + H2O = (S)-versiconol + acetate + H(+). It functions in the pathway mycotoxin biosynthesis. Versiconal hemiacetal acetate esterase; part of the fragmented gene cluster that mediates the biosynthesis of dothistromin (DOTH), a polyketide toxin very similar in structure to the aflatoxin precursor, versicolorin B. The first step of the pathway is the conversion of acetate to norsolorinic acid (NOR) and requires the fatty acid synthase subunits hexA and hexB, as well as the polyketide synthase pksA. PksA combines a hexanoyl starter unit and 7 malonyl-CoA extender units to synthesize the precursor NOR. The hexanoyl starter unit is provided to the acyl-carrier protein (ACP) domain by the fungal fatty acid synthase hexA/hexB. The second step is the conversion of NOR to averantin (AVN) and requires the norsolorinic acid ketoreductase nor1, which catalyzes the dehydration of norsolorinic acid to form (1'S)-averantin. The cytochrome P450 monooxygenase avnA then catalyzes the hydroxylation of AVN to 5'hydroxyaverantin (HAVN). The next step is performed by adhA that transforms HAVN to averufin (AVF). Averufin might then be converted to hydroxyversicolorone by cypX and avfA. Hydroxyversicolorone is further converted versiconal hemiacetal acetate (VHA) by moxY. VHA is then the substrate for the versiconal hemiacetal acetate esterase est1 to yield versiconal (VAL). Versicolorin B synthase vbsA then converts VAL to versicolorin B (VERB) by closing the bisfuran ring. Then, the activity of the versicolorin B desaturase verB leads to versicolorin A (VERA). DotB, a predicted chloroperoxidase, may perform epoxidation of the A-ring of VERA. Alternatively, a cytochrome P450, such as cypX or avnA could catalyze this step. It is also possible that another, uncharacterized, cytochrome P450 enzyme is responsible for this step. Opening of the epoxide could potentially be achieved by the epoxide hydrolase epoA. However, epoA seems not to be required for DOTH biosynthesis, but other epoxide hydrolases may have the ability to complement this hydrolysis. Alternatively, opening of the epoxide ring could be achieved non-enzymatically. The next step is the deoxygenation of ring A to yield the 5,8-dihydroxyanthraquinone which is most likely catalyzed by the NADPH dehydrogenase encoded by ver1. The last stages of DOTH biosynthesis are proposed to involve hydroxylation of the bisfuran. OrdB and norB might have oxidative roles here. An alternative possibility is that cytochrome P450 monoogenases such as avnA and cypX might perform these steps in addition to previously proposed steps. This Dothistroma septosporum (strain NZE10 / CBS 128990) (Red band needle blight fungus) protein is Versiconal hemiacetal acetate esterase.